Here is a 653-residue protein sequence, read N- to C-terminus: Probable syringafactin export ATP-binding/permease protein SyfD (653 aa).

The ABC transporter domain occupies 6-244 (LELNGVTRRF…NEKTTERLPT (239 aa)). 42–49 (GASGSGKS) contacts ATP. Helical transmembrane passes span 252–272 (LMANIGLFQEAFVMAWVALIS), 278–298 (LLTMLGIIIGITSVVSIVAIG), 526–546 (LALLLSLIAVISLAVGGIGVM), 583–603 (MVCLIGGVIGISLSFVIGYVF), and 616–636 (LGSIVTAFICSTLIGIVFGFV).

The protein belongs to the ABC transporter superfamily. Macrolide exporter (TC 3.A.1.122) family. As to quaternary structure, probably part of a tripartite efflux system, which is composed of an inner membrane transporter, a periplasmic membrane fusion protein, and an outer membrane component.

The protein localises to the cell inner membrane. In terms of biological role, probably involved in the export of syringafactins. This is Probable syringafactin export ATP-binding/permease protein SyfD from Pseudomonas syringae pv. syringae (strain B728a).